A 474-amino-acid chain; its full sequence is Kynureninase 2 (474 aa).

Pyridoxal 5'-phosphate-binding positions include L144, T145, 172 to 175 (FPSD), D258, H261, and Y283. K284 is subject to N6-(pyridoxal phosphate)lysine. Pyridoxal 5'-phosphate is bound by residues W323 and T351.

The protein belongs to the kynureninase family. In terms of assembly, homodimer. It depends on pyridoxal 5'-phosphate as a cofactor.

Its subcellular location is the cytoplasm. The catalysed reaction is L-kynurenine + H2O = anthranilate + L-alanine + H(+). It carries out the reaction 3-hydroxy-L-kynurenine + H2O = 3-hydroxyanthranilate + L-alanine + H(+). It participates in amino-acid degradation; L-kynurenine degradation; L-alanine and anthranilate from L-kynurenine: step 1/1. The protein operates within cofactor biosynthesis; NAD(+) biosynthesis; quinolinate from L-kynurenine: step 2/3. Catalyzes the cleavage of L-kynurenine (L-Kyn) and L-3-hydroxykynurenine (L-3OHKyn) into anthranilic acid (AA) and 3-hydroxyanthranilic acid (3-OHAA), respectively. The chain is Kynureninase 2 (bna5-2) from Emericella nidulans (strain FGSC A4 / ATCC 38163 / CBS 112.46 / NRRL 194 / M139) (Aspergillus nidulans).